The chain runs to 326 residues: Pyruvate dehydrogenase E1 component subunit beta (326 aa).

Thiamine diphosphate is bound at residue Glu59.

As to quaternary structure, heterodimer of an alpha and a beta chain. Requires thiamine diphosphate as cofactor.

The enzyme catalyses N(6)-[(R)-lipoyl]-L-lysyl-[protein] + pyruvate + H(+) = N(6)-[(R)-S(8)-acetyldihydrolipoyl]-L-lysyl-[protein] + CO2. Its function is as follows. The pyruvate dehydrogenase complex catalyzes the overall conversion of pyruvate to acetyl-CoA and CO(2). It contains multiple copies of three enzymatic components: pyruvate dehydrogenase (E1), dihydrolipoamide acetyltransferase (E2) and lipoamide dehydrogenase (E3). This Rickettsia felis (strain ATCC VR-1525 / URRWXCal2) (Rickettsia azadi) protein is Pyruvate dehydrogenase E1 component subunit beta (pdhB).